A 330-amino-acid chain; its full sequence is HPr kinase/phosphorylase (330 aa).

Residues His153 and Lys174 contribute to the active site. 168–175 (GKSGLGKS) provides a ligand contact to ATP. Ser175 provides a ligand contact to Mg(2+). The active-site Proton acceptor; for phosphorylation activity. Proton donor; for dephosphorylation activity is the Asp192. The important for the catalytic mechanism of both phosphorylation and dephosphorylation stretch occupies residues 217 to 226 (MEIRGLGVVD). Glu218 is a Mg(2+) binding site. Arg259 is an active-site residue. An important for the catalytic mechanism of dephosphorylation region spans residues 280-285 (PIFPGK).

Belongs to the HPrK/P family. In terms of assembly, homohexamer. Requires Mg(2+) as cofactor.

The enzyme catalyses [HPr protein]-L-serine + ATP = [HPr protein]-O-phospho-L-serine + ADP + H(+). It carries out the reaction [HPr protein]-O-phospho-L-serine + phosphate + H(+) = [HPr protein]-L-serine + diphosphate. Its function is as follows. Catalyzes the ATP- as well as the pyrophosphate-dependent phosphorylation of a specific serine residue in HPr, a phosphocarrier protein of the phosphoenolpyruvate-dependent sugar phosphotransferase system (PTS). HprK/P also catalyzes the pyrophosphate-producing, inorganic phosphate-dependent dephosphorylation (phosphorolysis) of seryl-phosphorylated HPr (P-Ser-HPr). The polypeptide is HPr kinase/phosphorylase (Chlorobium limicola (strain DSM 245 / NBRC 103803 / 6330)).